Here is a 387-residue protein sequence, read N- to C-terminus: Lactosylceramide alpha-2,3-sialyltransferase (387 aa).

At Met-1–Ser-33 the chain is on the cytoplasmic side. Residues Leu-34–Ile-54 form a helical; Signal-anchor for type II membrane protein membrane-spanning segment. At Leu-55–His-387 the chain is on the extracellular side. N-linked (GlcNAc...) asparagine glycosylation is found at Asn-58 and Asn-208. A disulfide bridge connects residues Cys-167 and Cys-325.

The protein belongs to the glycosyltransferase 29 family.

The protein localises to the golgi apparatus membrane. It carries out the reaction a beta-D-Gal-(1-&gt;4)-beta-D-Glc-(1&lt;-&gt;1)-Cer(d18:1(4E)) + CMP-N-acetyl-beta-neuraminate = a ganglioside GM3 (d18:1(4E)) + CMP + H(+). The enzyme catalyses ganglioside GA2 (d18:1(4E)/18:0) + CMP-N-acetyl-beta-neuraminate = ganglioside GM2 (d18:1(4E)/18:0) + CMP + H(+). The catalysed reaction is a beta-D-Gal-(1&lt;-&gt;1')-ceramide + CMP-N-acetyl-beta-neuraminate = N-acetyl-alpha-neuraminosyl-(2-&gt;3)-beta-D-galactosyl-(1&lt;-&gt;1')-ceramide + CMP + H(+). It catalyses the reaction ganglioside GA1 (d18:1(4E)/18:0) + CMP-N-acetyl-beta-neuraminate = ganglioside GM1 (d18:1(4E)/18:0) + CMP + H(+). Functionally, transfers the sialyl group (N-acetyl-alpha-neuraminyl or NeuAc) from CMP-NeuAc to the non-reducing terminal galactose (Gal) of glycosphingolipids forming gangliosides (important molecules involved in the regulation of multiple cellular processes, including cell proliferation and differentiation, apoptosis, embryogenesis, development, and oncogenesis). Mainly involved in the biosynthesis of ganglioside GM3 but can also use different glycolipids as substrate acceptors such as D-galactosylceramide (GalCer), asialo-GM2 (GA2) and asialo-GM1 (GA1), although less preferentially than beta-D-Gal-(1-&gt;4)-beta-D-Glc-(1&lt;-&gt;1)-Cer (LacCer). In Rattus norvegicus (Rat), this protein is Lactosylceramide alpha-2,3-sialyltransferase (St3gal5).